Consider the following 136-residue polypeptide: Small ribosomal subunit protein uS9 (136 aa).

The interval 97-136 (SPDNRKPLKTEGHLSRDPRAKERRKYGLKKARKAPQFSKR) is disordered. Positions 98–116 (PDNRKPLKTEGHLSRDPRA) are enriched in basic and acidic residues. The span at 117–136 (KERRKYGLKKARKAPQFSKR) shows a compositional bias: basic residues.

This sequence belongs to the universal ribosomal protein uS9 family.

This is Small ribosomal subunit protein uS9 from Prochlorococcus marinus (strain MIT 9312).